Here is a 294-residue protein sequence, read N- to C-terminus: Lipoyl synthase (294 aa).

[4Fe-4S] cluster-binding residues include Cys35, Cys40, Cys46, Cys61, Cys65, Cys68, and Ser275. Positions 46-264 constitute a Radical SAM core domain; that stretch reads CWGGGTATVM…REAGLGLGFR (219 aa).

This sequence belongs to the radical SAM superfamily. Lipoyl synthase family. [4Fe-4S] cluster serves as cofactor.

Its subcellular location is the cytoplasm. It carries out the reaction [[Fe-S] cluster scaffold protein carrying a second [4Fe-4S](2+) cluster] + N(6)-octanoyl-L-lysyl-[protein] + 2 oxidized [2Fe-2S]-[ferredoxin] + 2 S-adenosyl-L-methionine + 4 H(+) = [[Fe-S] cluster scaffold protein] + N(6)-[(R)-dihydrolipoyl]-L-lysyl-[protein] + 4 Fe(3+) + 2 hydrogen sulfide + 2 5'-deoxyadenosine + 2 L-methionine + 2 reduced [2Fe-2S]-[ferredoxin]. It functions in the pathway protein modification; protein lipoylation via endogenous pathway; protein N(6)-(lipoyl)lysine from octanoyl-[acyl-carrier-protein]: step 2/2. Its function is as follows. Catalyzes the radical-mediated insertion of two sulfur atoms into the C-6 and C-8 positions of the octanoyl moiety bound to the lipoyl domains of lipoate-dependent enzymes, thereby converting the octanoylated domains into lipoylated derivatives. This chain is Lipoyl synthase, found in Anaeromyxobacter sp. (strain Fw109-5).